The chain runs to 385 residues: Serpin-Z1 (385 aa).

An RCL region spans residues 317 to 341 (GAEAAAATADGDCGCSLDFVEPPKK).

Belongs to the serpin family.

Functionally, probable serine protease inhibitor. This Arabidopsis thaliana (Mouse-ear cress) protein is Serpin-Z1.